A 104-amino-acid polypeptide reads, in one-letter code: Translation initiation factor 1A (104 aa).

A compositionally biased stretch (low complexity) spans 1-14; the sequence is MRGQQTPPQQPTRV. Residues 1–20 are disordered; sequence MRGQQTPPQQPTRVRTPREN. The region spanning 12-87 is the S1-like domain; sequence TRVRTPRENE…EKCDVIWRYT (76 aa).

Belongs to the eIF-1A family.

Seems to be required for maximal rate of protein biosynthesis. Enhances ribosome dissociation into subunits and stabilizes the binding of the initiator Met-tRNA(I) to 40 S ribosomal subunits. This chain is Translation initiation factor 1A, found in Methanococcus maripaludis (strain DSM 14266 / JCM 13030 / NBRC 101832 / S2 / LL).